Consider the following 341-residue polypeptide: GTP 3',8-cyclase (341 aa).

The Radical SAM core domain occupies 11 to 231 (QKSRPLRDLR…RIINEDMPIE (221 aa)). Position 20 (arginine 20) interacts with GTP. [4Fe-4S] cluster is bound by residues cysteine 27 and cysteine 31. Tyrosine 33 contacts S-adenosyl-L-methionine. Residue cysteine 34 coordinates [4Fe-4S] cluster. Position 75 (arginine 75) interacts with GTP. Glycine 79 contributes to the S-adenosyl-L-methionine binding site. Threonine 106 is a GTP binding site. Serine 130 contacts S-adenosyl-L-methionine. Lysine 167 provides a ligand contact to GTP. Position 201 (methionine 201) interacts with S-adenosyl-L-methionine. Residues cysteine 265 and cysteine 268 each coordinate [4Fe-4S] cluster. 270–272 (RAR) contributes to the GTP binding site. Cysteine 282 is a [4Fe-4S] cluster binding site.

The protein belongs to the radical SAM superfamily. MoaA family. Monomer and homodimer. Requires [4Fe-4S] cluster as cofactor.

It carries out the reaction GTP + AH2 + S-adenosyl-L-methionine = (8S)-3',8-cyclo-7,8-dihydroguanosine 5'-triphosphate + 5'-deoxyadenosine + L-methionine + A + H(+). Its pathway is cofactor biosynthesis; molybdopterin biosynthesis. Its function is as follows. Catalyzes the cyclization of GTP to (8S)-3',8-cyclo-7,8-dihydroguanosine 5'-triphosphate. The polypeptide is GTP 3',8-cyclase (Bacillus licheniformis (strain ATCC 14580 / DSM 13 / JCM 2505 / CCUG 7422 / NBRC 12200 / NCIMB 9375 / NCTC 10341 / NRRL NRS-1264 / Gibson 46)).